Consider the following 282-residue polypeptide: Non-selective voltage-gated ion channel VDAC2 (282 aa).

The residue at position 1 (A1) is an N-acetylalanine. 19 beta stranded membrane-spanning segments follow: residues 25–34, 38–46, 53–63, 68–75, 79–88, 94–103, 110–119, 122–129, 136–144, 149–157, 162–174, 177–184, 188–197, 201–210, 217–226, 230–237, 241–250, 253–262, and 272–281; these read LVKLDVKTKS, VEFTTSGTS, VNGSLETKYKW, LTFTEKWN, TLGTEIAIED, LKLTFDTTFS, SGKVKAAYKQ, VNLGCDVD, AIHGSAVVG, LAGYQMTFD, KLTKNNFAVGYKT, FQLHTNVN, EFAGSIYQKV, METAVNLAWT, RFGIAAKYQL, AAISAKVN, LVGVGYTQTL, GVKLTLSALV, and HKLGLGLELE. Residues 241-243 and 259-263 contribute to the NAD(+) site; these read LVG and SALVD.

It belongs to the eukaryotic mitochondrial porin family. Monomer, homodimer and higher order oligomers; formation of higher order structures is necessary for scramblase activity. As to expression, expressed in skeletal muscle and oocytes.

It is found in the mitochondrion outer membrane. The protein localises to the membrane. The enzyme catalyses chloride(in) = chloride(out). The catalysed reaction is K(+)(in) = K(+)(out). It carries out the reaction a 1,2-diacyl-sn-glycero-3-phospho-L-serine(in) = a 1,2-diacyl-sn-glycero-3-phospho-L-serine(out). It catalyses the reaction a 1,2-diacyl-sn-glycero-3-phosphocholine(in) = a 1,2-diacyl-sn-glycero-3-phosphocholine(out). The enzyme catalyses a 1,2-diacyl-sn-glycero-3-phospho-(1D-myo-inositol)(in) = a 1,2-diacyl-sn-glycero-3-phospho-(1D-myo-inositol)(out). Its function is as follows. Non-selective voltage-gated ion channel that mediates the transport of anions and cations through the mitochondrion outer membrane and plasma membrane. The channel adopts an open conformation at zero mV and a closed conformation at both positive and negative potentials. There are two populations of channels; the main that functions in a lower open-state conductance with lower ion selectivity, that switch, in a voltage-dependent manner, from the open to a low-conducting 'closed' state and the other that has a normal ion selectivity in the typical high conductance, 'open' state. In terms of biological role, catalyzes the scrambling of phospholipids across the outer mitochondrial membrane; the mechanism is unrelated to channel activity and is capable of translocating both anionic and zwitterionic phospholipids. This is Non-selective voltage-gated ion channel VDAC2 from Xenopus laevis (African clawed frog).